The chain runs to 176 residues: Adenine phosphoribosyltransferase (176 aa).

This sequence belongs to the purine/pyrimidine phosphoribosyltransferase family. As to quaternary structure, homodimer.

Its subcellular location is the cytoplasm. It carries out the reaction AMP + diphosphate = 5-phospho-alpha-D-ribose 1-diphosphate + adenine. Its pathway is purine metabolism; AMP biosynthesis via salvage pathway; AMP from adenine: step 1/1. In terms of biological role, catalyzes a salvage reaction resulting in the formation of AMP, that is energically less costly than de novo synthesis. This is Adenine phosphoribosyltransferase from Methylobacillus flagellatus (strain ATCC 51484 / DSM 6875 / VKM B-1610 / KT).